The chain runs to 687 residues: Calcium-binding protein SP84 (687 aa).

A signal peptide spans 1–19 (MMRAIYLLVVVCWAAAANA). EF-hand domains follow at residues 152–187 (LESD…HKNK), 257–292 (LTEI…TDDV), 406–441 (KTEA…PHMV), 476–511 (IENA…NNDA), and 579–614 (MTER…VKDL). The Ca(2+) site is built by Asp-592, Asn-594, Asp-596, Glu-598, and Asp-603.

As to expression, expressed in salivary glands where expression is strongest in type III cells in the posterior lobe of the principal glands (at protein level). Not expressed in midgut, Malpighian tubules or epidermis.

The protein resides in the secreted. Its function is as follows. Binds calcium. During feeding of the phloem sap, protein is injected into sieve tubes of rice plants. This process may suppress the sieve-element clogging and facilitate continuous ingestion from sieve tubes. The sequence is that of Calcium-binding protein SP84 from Nephotettix cincticeps (Green rice leafhopper).